Reading from the N-terminus, the 77-residue chain is Putative antitoxin VapB3 (77 aa).

It belongs to the UPF0330 family.

Possibly the antitoxin component of a type II toxin-antitoxin (TA) system. Its cognate toxin is VapC3 (Potential). The chain is Putative antitoxin VapB3 (vapB3) from Methanocaldococcus jannaschii (strain ATCC 43067 / DSM 2661 / JAL-1 / JCM 10045 / NBRC 100440) (Methanococcus jannaschii).